A 468-amino-acid chain; its full sequence is uncharacterized protein (468 aa).

The TRAM domain occupies 3-61; sequence TFANGMTLDVTVDALAPGGKAVCRHEGRVIFVDRGLPGQQLHVRLTTVRKRFAEAECLA. Residues Cys-74, Cys-80, Cys-83, and Cys-162 each contribute to the [4Fe-4S] cluster site. S-adenosyl-L-methionine contacts are provided by Gln-288, Tyr-317, Glu-338, and Asp-389. The Nucleophile role is filled by Cys-416.

This sequence belongs to the class I-like SAM-binding methyltransferase superfamily. RNA M5U methyltransferase family.

This is an uncharacterized protein from Nitratidesulfovibrio vulgaris (strain ATCC 29579 / DSM 644 / CCUG 34227 / NCIMB 8303 / VKM B-1760 / Hildenborough) (Desulfovibrio vulgaris).